The primary structure comprises 228 residues: E3 ubiquitin-protein ligase RNF114 (228 aa).

An RING-type zinc finger spans residues 29–68; it reads CPVCLEVYEKPVQVPCGHVFCSACLQECLKPKKPVCGVCR. Zn(2+)-binding residues include cysteine 91 and cysteine 94. The segment at 91–110 adopts a C2HC RNF-type zinc-finger fold; sequence CHGCRKNFFLSKIRAHVATC. At lysine 102 the chain carries N6-acetyllysine. Positions 106 and 110 each coordinate Zn(2+). N6-acetyllysine is present on lysine 112.

As to quaternary structure, interacts with XAF1, the interaction increases XAF1 stability and proapoptotic effects, and may regulate IFN signaling. Post-translationally, autoubiquitinated. Polyubiquitinated in the presence of E2 enzymes UBE2D1, UBE2D2 and UBE2D3, but only monoubiquitinated in the presence of UBE2E1.

The protein resides in the cytoplasm. It localises to the nucleus. The catalysed reaction is S-ubiquitinyl-[E2 ubiquitin-conjugating enzyme]-L-cysteine + [acceptor protein]-L-lysine = [E2 ubiquitin-conjugating enzyme]-L-cysteine + N(6)-ubiquitinyl-[acceptor protein]-L-lysine.. It participates in protein modification; protein ubiquitination. E3 ubiquitin-protein ligase that promotes the ubiquitination of various substrates. In turn, participates in the regulation of many biological processes including cell cycle, apoptosis, osteoclastogenesis as well as innate or adaptive immunity. Acts as negative regulator of NF-kappa-B-dependent transcription by promoting the ubiquitination and stabilization of the NF-kappa-B inhibitor TNFAIP3. May promote the ubiquitination of TRAF6 as well. Also acts as a negative regulator of T-cell activation. Inhibits cellular dsRNA responses and interferon production by targeting MAVS component for proteasomal degradation. Ubiquitinates the CDK inhibitor CDKN1A leading to its degradationand probably also CDKN1B and CDKN1C. This activity stimulates cell cycle G1-to-S phase transition and suppresses cellular senescence. May play a role in spermatogenesis. Inhibits classical swine fever virus replication by mediating 'K27'-linked ubiquitination of viral NS4B and inducing its degradation via the proteasome. In Sus scrofa (Pig), this protein is E3 ubiquitin-protein ligase RNF114 (RNF114).